Consider the following 172-residue polypeptide: Agamous-like MADS-box protein AGL29 (172 aa).

In terms of domain architecture, MADS-box spans 1-61; it reads MGRRKIKMEM…GKPFSYGKPN (61 aa). The stretch at 86 to 123 forms a coiled coil; the sequence is NYRPKLKRLSERLDLLNQEVEAEKERGEKSQEKLESAG. Positions 106 to 125 are disordered; the sequence is EAEKERGEKSQEKLESAGDE.

In terms of tissue distribution, expressed in pollen.

It is found in the nucleus. Probable transcription factor. The protein is Agamous-like MADS-box protein AGL29 of Arabidopsis thaliana (Mouse-ear cress).